Here is a 685-residue protein sequence, read N- to C-terminus: Probable transketolase (685 aa).

H32 is a substrate binding site. Thiamine diphosphate-binding positions include H72 and 121–123; that span reads GPL. Mg(2+) is bound at residue D162. Positions 163 and 192 each coordinate thiamine diphosphate. Residues N192 and I194 each contribute to the Mg(2+) site. Residues H268, R363, and S390 each coordinate substrate. H268 is a binding site for thiamine diphosphate. Residues E422 and F448 each contribute to the thiamine diphosphate site. E422 (proton donor) is an active-site residue. Substrate is bound by residues H472, D480, and R531.

Belongs to the transketolase family. In terms of assembly, homodimer. Requires Mg(2+) as cofactor. The cofactor is Ca(2+). It depends on Mn(2+) as a cofactor. Co(2+) is required as a cofactor. Thiamine diphosphate serves as cofactor.

It catalyses the reaction D-sedoheptulose 7-phosphate + D-glyceraldehyde 3-phosphate = aldehydo-D-ribose 5-phosphate + D-xylulose 5-phosphate. Its function is as follows. Catalyzes the transfer of a two-carbon ketol group from a ketose donor to an aldose acceptor, via a covalent intermediate with the cofactor thiamine pyrophosphate. The chain is Probable transketolase from Schizosaccharomyces pombe (strain 972 / ATCC 24843) (Fission yeast).